A 229-amino-acid chain; its full sequence is Cytochrome c oxidase subunit 2 (229 aa).

Over 1-26 (MATWAQLNFQDAASPMMEQLHYFHDH) the chain is Mitochondrial intermembrane. Residues 27–48 (TMMVLVIITIMVAYIMGTMFFN) form a helical membrane-spanning segment. Topologically, residues 49 to 62 (KDVNRYLLDGQKIE) are mitochondrial matrix. Residues 63–82 (TEWTIVPVFVLVIIAMPSLR) traverse the membrane as a helical segment. Residues 83 to 229 (LLYLLDEVNE…INWIQNMSEA (147 aa)) are Mitochondrial intermembrane-facing. Residues His161, Cys196, Glu198, Cys200, His204, and Met207 each coordinate Cu cation. Glu198 contributes to the Mg(2+) binding site.

This sequence belongs to the cytochrome c oxidase subunit 2 family. Component of the cytochrome c oxidase (complex IV, CIV), a multisubunit enzyme composed of a catalytic core of 3 subunits and several supernumerary subunits. The complex exists as a monomer or a dimer and forms supercomplexes (SCs) in the inner mitochondrial membrane with ubiquinol-cytochrome c oxidoreductase (cytochrome b-c1 complex, complex III, CIII). Requires Cu cation as cofactor.

The protein localises to the mitochondrion inner membrane. The enzyme catalyses 4 Fe(II)-[cytochrome c] + O2 + 8 H(+)(in) = 4 Fe(III)-[cytochrome c] + 2 H2O + 4 H(+)(out). Its function is as follows. Component of the cytochrome c oxidase, the last enzyme in the mitochondrial electron transport chain which drives oxidative phosphorylation. The respiratory chain contains 3 multisubunit complexes succinate dehydrogenase (complex II, CII), ubiquinol-cytochrome c oxidoreductase (cytochrome b-c1 complex, complex III, CIII) and cytochrome c oxidase (complex IV, CIV), that cooperate to transfer electrons derived from NADH and succinate to molecular oxygen, creating an electrochemical gradient over the inner membrane that drives transmembrane transport and the ATP synthase. Cytochrome c oxidase is the component of the respiratory chain that catalyzes the reduction of oxygen to water. Electrons originating from reduced cytochrome c in the intermembrane space (IMS) are transferred via the dinuclear copper A center (CU(A)) of subunit 2 and heme A of subunit 1 to the active site in subunit 1, a binuclear center (BNC) formed by heme A3 and copper B (CU(B)). The BNC reduces molecular oxygen to 2 water molecules using 4 electrons from cytochrome c in the IMS and 4 protons from the mitochondrial matrix. This Sympetrum striolatum (Common darter dragonfly) protein is Cytochrome c oxidase subunit 2 (COII).